The primary structure comprises 287 residues: Viomycin phosphotransferase (287 aa).

The Proton acceptor role is filled by Asp-190.

The protein belongs to the aminoglycoside phosphotransferase family.

The catalysed reaction is viomycin + ATP = O-phosphoviomycin + ADP + H(+). Its function is as follows. The aminoglycoside phosphotransferases achieve inactivation of their antibiotic substrates by phosphorylation. The chain is Viomycin phosphotransferase (vph) from Streptomyces vinaceus.